A 98-amino-acid polypeptide reads, in one-letter code: MTLIHMNILMAFSMSLVGLLMYRSHLMSALLCLEGMMLSLFVLAALTILNSHFTLANMMPIILLVFAACEAAIGLALLVMVSNTYGTDYVQNLNLLQC.

A run of 3 helical transmembrane segments spans residues 1–21 (MTLIHMNILMAFSMSLVGLLM), 29–49 (ALLCLEGMMLSLFVLAALTIL), and 61–81 (IILLVFAACEAAIGLALLVMV).

Belongs to the complex I subunit 4L family. As to quaternary structure, core subunit of respiratory chain NADH dehydrogenase (Complex I) which is composed of 45 different subunits.

The protein resides in the mitochondrion inner membrane. The enzyme catalyses a ubiquinone + NADH + 5 H(+)(in) = a ubiquinol + NAD(+) + 4 H(+)(out). In terms of biological role, core subunit of the mitochondrial membrane respiratory chain NADH dehydrogenase (Complex I) which catalyzes electron transfer from NADH through the respiratory chain, using ubiquinone as an electron acceptor. Part of the enzyme membrane arm which is embedded in the lipid bilayer and involved in proton translocation. The protein is NADH-ubiquinone oxidoreductase chain 4L (MT-ND4L) of Eschrichtius robustus (California gray whale).